We begin with the raw amino-acid sequence, 904 residues long: DNA replication licensing factor MCM2 (904 aa).

The span at 1–12 (MAESSESLSASS) shows a compositional bias: low complexity. A disordered region spans residues 1-166 (MAESSESLSA…ATEDGEEDEE (166 aa)). Ala2 is subject to N-acetylalanine. Residues 2–257 (AESSESLSAS…LPEAPAELLQ (256 aa)) are interaction with KAT7. 2 positions are modified to phosphoserine: Ser12 and Ser21. A Phosphothreonine modification is found at Thr25. A phosphoserine mark is found at Ser26, Ser27, and Ser32. The residue at position 39 (Thr39) is a Phosphothreonine. Ser40 bears the Phosphoserine; by CDC7 mark. Position 41 is a phosphoserine (Ser41). A Phosphoserine; by CDC7 modification is found at Ser53. The residue at position 59 (Thr59) is a Phosphothreonine. The tract at residues 61–130 (GPMEEEEDGE…DREAGRGLGR (70 aa)) is interaction with DNJC9. A compositionally biased stretch (acidic residues) spans 62-73 (PMEEEEDGEELI). Basic and acidic residues predominate over residues 76-85 (GMERDYRPIP). Residues 88-104 (DVYEAEGLALDDEDVEE) show a composition bias toward acidic residues. At Ser108 the chain carries Phosphoserine. Positions 111–125 (EAAERTMRQRDREAG) are enriched in basic and acidic residues. At Tyr137 the chain carries Phosphotyrosine. Phosphoserine is present on residues Ser139 and Ser140. A Glycyl lysine isopeptide (Lys-Gly) (interchain with G-Cter in SUMO2) cross-link involves residue Lys178. Lys216 carries the N6-acetyllysine modification. A C4-type zinc finger spans residues 329-355 (CSKCNFVLGPFCQSQNQEVKPGSCPEC). Residues Ser381 and Ser484 each carry the phosphoserine modification. Residues 473 to 680 (IGEKIFASIA…QDEMLARFVV (208 aa)) form the MCM domain. Residues Ser530 and Gln531 each contribute to the ADP site. The Arginine finger signature appears at 655 to 658 (SRFD).

Belongs to the MCM family. As to quaternary structure, component of the MCM2-7 complex. The complex forms a toroidal hexameric ring with the proposed subunit order MCM2-MCM6-MCM4-MCM7-MCM3-MCM5. Component of the CMG helicase complex, a hexameric ring of related MCM2-7 subunits stabilized by CDC45 and the tetrameric GINS complex. Interacts with DBF4. Interacts with KAT7. May interact with MCM10. Component of the replisome complex composed of at least DONSON, MCM2, MCM7, PCNA and TICRR. Forms a co-chaperone complex with DNAJC9 and histone H3.3-H4 heterodimers. Within the complex, interacts (via N-terminus) with DNAJC9 (via C-terminus); the interaction is histone-dependent. Interacts with AGER/RAGE; the interaction is increased following DNA replication stress and stabilizes the MCM2-7 complex at replication forks. Phosphorylated on Ser-108 by ATR in proliferating cells. Ser-108 proliferation is increased by genotoxic agents. Ser-40 is mediated by the CDC7-DBF4 and CDC7-DBF4B complexes, while Ser-53 phosphorylation is only mediated by the CDC7-DBF4 complex. Phosphorylation by the CDC7-DBF4 complex during G1/S phase is required for the initiation of DNA replication. Post-translationally, acetylated by MCM3AP. In terms of processing, O-glycosylated (O-GlcNAcylated), in a cell cycle-dependent manner.

It is found in the nucleus. Its subcellular location is the chromosome. It catalyses the reaction ATP + H2O = ADP + phosphate + H(+). Its function is as follows. Acts as a component of the MCM2-7 complex (MCM complex) which is the replicative helicase essential for 'once per cell cycle' DNA replication initiation and elongation in eukaryotic cells. Core component of CDC45-MCM-GINS (CMG) helicase, the molecular machine that unwinds template DNA during replication, and around which the replisome is built. The active ATPase sites in the MCM2-7 ring are formed through the interaction surfaces of two neighboring subunits such that a critical structure of a conserved arginine finger motif is provided in trans relative to the ATP-binding site of the Walker A box of the adjacent subunit. The six ATPase active sites, however, are likely to contribute differentially to the complex helicase activity. Required for the entry in S phase and for cell division. Plays a role in terminally differentiated hair cells development of the cochlea and induces cells apoptosis. This is DNA replication licensing factor MCM2 (Mcm2) from Mus musculus (Mouse).